Reading from the N-terminus, the 227-residue chain is uncharacterized protein (227 aa).

This is an uncharacterized protein from Caenorhabditis elegans.